Reading from the N-terminus, the 215-residue chain is Probable transaldolase (215 aa).

Catalysis depends on Lys83, which acts as the Schiff-base intermediate with substrate.

The protein belongs to the transaldolase family. Type 3B subfamily.

It localises to the cytoplasm. The catalysed reaction is D-sedoheptulose 7-phosphate + D-glyceraldehyde 3-phosphate = D-erythrose 4-phosphate + beta-D-fructose 6-phosphate. It functions in the pathway carbohydrate degradation; pentose phosphate pathway; D-glyceraldehyde 3-phosphate and beta-D-fructose 6-phosphate from D-ribose 5-phosphate and D-xylulose 5-phosphate (non-oxidative stage): step 2/3. Its function is as follows. Transaldolase is important for the balance of metabolites in the pentose-phosphate pathway. In Methanococcus maripaludis (strain C6 / ATCC BAA-1332), this protein is Probable transaldolase.